A 549-amino-acid polypeptide reads, in one-letter code: Beta-mannosyltransferase 3 (549 aa).

At 1–37 (MFESDLSFYSALLILCCPISIVFFKKFPIKGYTGANK) the chain is on the cytoplasmic side. The chain crosses the membrane as a helical span at residues 38–58 (VSLFLQCLIAILNLNILYSFI). Topologically, residues 59 to 549 (NSLTITLGHD…DTMGWDKLSR (491 aa)) are extracellular.

Belongs to the BMT family.

It is found in the membrane. Its function is as follows. Beta-mannosyltransferase involved in cell wall biosynthesis. Required for addition of the second beta-mannose residue to acid-stable fraction of cell wall phosphopeptidomannan, and in elongation of beta-mannose chains on the phosphopeptidomannan acid-labile fraction. This is Beta-mannosyltransferase 3 (BMT3) from Candida albicans (strain SC5314 / ATCC MYA-2876) (Yeast).